The following is a 120-amino-acid chain: uncharacterized protein (120 aa).

It belongs to the asp23 family.

This is an uncharacterized protein from Bacillus subtilis (strain 168).